Here is a 347-residue protein sequence, read N- to C-terminus: 5-deoxyribose 1-phosphate isomerase (347 aa).

Residues 48–50 (RGA), Arg91, and Gln198 each bind substrate. Asp239 acts as the Proton donor in catalysis. 249-250 (NK) contributes to the substrate binding site.

This sequence belongs to the EIF-2B alpha/beta/delta subunits family. DrdI subfamily.

It carries out the reaction 5-deoxy-alpha-D-ribose 1-phosphate = 5-deoxy-D-ribulose 1-phosphate. It participates in carbohydrate degradation. Catalyzes the isomerization of 5-deoxy-alpha-D-ribose 1-phosphate to 5-deoxy-D-ribulose 1-phosphate, as part of a 5-deoxyribose salvage pathway that recycles this toxic radical SAM enzyme by-product to mainstream metabolites. The sequence is that of 5-deoxyribose 1-phosphate isomerase from Petrotoga mobilis (strain DSM 10674 / SJ95).